We begin with the raw amino-acid sequence, 327 residues long: L-lactate dehydrogenase (327 aa).

Residues Val-18, Asp-39, Lys-44, Tyr-69, and 83-84 (GA) each bind NAD(+). Substrate contacts are provided by residues Gln-86, Arg-92, and 124–127 (NPVD). Residues 122 to 124 (AAN) and Ser-147 each bind NAD(+). Residue 152-155 (DSAR) coordinates substrate. Arg-157 and His-172 together coordinate beta-D-fructose 1,6-bisphosphate. The active-site Proton acceptor is His-179. Residue Tyr-224 is modified to Phosphotyrosine. Thr-233 serves as a coordination point for substrate.

Belongs to the LDH/MDH superfamily. LDH family. As to quaternary structure, homotetramer.

The protein localises to the cytoplasm. It catalyses the reaction (S)-lactate + NAD(+) = pyruvate + NADH + H(+). The protein operates within fermentation; pyruvate fermentation to lactate; (S)-lactate from pyruvate: step 1/1. Allosterically activated by fructose 1,6-bisphosphate (FBP). Functionally, catalyzes the conversion of lactate to pyruvate. The protein is L-lactate dehydrogenase of Streptococcus equi subsp. equi (strain 4047).